Consider the following 211-residue polypeptide: Urease accessory protein UreF (211 aa).

A disordered region spans residues 71-93; that stretch reads DDADRETDARTPAPAARHASRSQ.

The protein belongs to the UreF family. In terms of assembly, ureD, UreF and UreG form a complex that acts as a GTP-hydrolysis-dependent molecular chaperone, activating the urease apoprotein by helping to assemble the nickel containing metallocenter of UreC. The UreE protein probably delivers the nickel.

It localises to the cytoplasm. Its function is as follows. Required for maturation of urease via the functional incorporation of the urease nickel metallocenter. This is Urease accessory protein UreF from Mycobacterium bovis (strain ATCC BAA-935 / AF2122/97).